The following is a 255-amino-acid chain: Acetylglutamate kinase (255 aa).

Residues glycine 40 to glycine 41, arginine 62, and asparagine 153 each bind substrate.

It belongs to the acetylglutamate kinase family. ArgB subfamily.

The protein localises to the cytoplasm. It carries out the reaction N-acetyl-L-glutamate + ATP = N-acetyl-L-glutamyl 5-phosphate + ADP. Its pathway is amino-acid biosynthesis; L-arginine biosynthesis; N(2)-acetyl-L-ornithine from L-glutamate: step 2/4. Its function is as follows. Catalyzes the ATP-dependent phosphorylation of N-acetyl-L-glutamate. The chain is Acetylglutamate kinase from Bacillus cereus (strain ZK / E33L).